Consider the following 477-residue polypeptide: uncharacterized protein (477 aa).

Positions 1–18 (MWTALVLVWISSVPLSRS) are cleaved as a signal peptide. Over 19-427 (HTVPAVPRHL…DPLTPSLVNK (409 aa)) the chain is Extracellular. 3 N-linked (GlcNAc...) asparagine glycosylation sites follow: asparagine 40, asparagine 51, and asparagine 77. Disordered regions lie at residues 79-103 (TRVT…GTAD), 239-366 (GTIN…TGGP), and 378-398 (KATA…DVKV). Over residues 85–97 (TTPHGTNTSTPTT) the composition is skewed to low complexity. 2 stretches are compositionally biased toward polar residues: residues 253–288 (PAKS…QPVH) and 298–309 (PSNTTLEPNTPK). N-linked (GlcNAc...) asparagine glycosylation occurs at asparagine 300. Low complexity-rich tracts occupy residues 310–326 (SVAS…QVQT), 348–361 (TSPT…LPTQ), and 378–393 (KATA…SRSS). A helical membrane pass occupies residues 428 to 448 (MFLLVVLIVGVTLFIAVLMMF). Topologically, residues 449-477 (ALQAYESYKKKDYTQVDYLINGMYADSEM) are cytoplasmic.

Its subcellular location is the cell membrane. The protein resides in the golgi apparatus. The protein localises to the trans-Golgi network membrane. This is an uncharacterized protein from Rattus norvegicus (Rat).